The sequence spans 195 residues: dCTP deaminase, dUMP-forming (195 aa).

DCTP is bound by residues 105–110, Asp-123, 131–133, Gln-152, Tyr-166, Lys-173, and Gln-177; these read RSSLGR and TLE. Glu-133 functions as the Proton donor/acceptor in the catalytic mechanism. The disordered stretch occupies residues 161-195; it reads PADRPYGDERGSKYQDQDGPQASRIRGDREFGGTQ. Basic and acidic residues predominate over residues 165-176; the sequence is PYGDERGSKYQD. The segment covering 185 to 195 has biased composition (basic and acidic residues); it reads IRGDREFGGTQ.

Belongs to the dCTP deaminase family. In terms of assembly, homotrimer.

The enzyme catalyses dCTP + 2 H2O = dUMP + NH4(+) + diphosphate. It functions in the pathway pyrimidine metabolism; dUMP biosynthesis; dUMP from dCTP: step 1/1. Its function is as follows. Bifunctional enzyme that catalyzes both the deamination of dCTP to dUTP and the hydrolysis of dUTP to dUMP without releasing the toxic dUTP intermediate. This Halobacterium salinarum (strain ATCC 700922 / JCM 11081 / NRC-1) (Halobacterium halobium) protein is dCTP deaminase, dUMP-forming.